We begin with the raw amino-acid sequence, 232 residues long: Secreted LysM effector Mg3LysM (232 aa).

An N-terminal signal peptide occupies residues 1 to 16 (MQNIFLAATLLGAAFA). One can recognise a LysM 1 domain in the interval 47-91 (TNYTVKAGDTLGAIAKQYNSGVCDIAKVNGIDNPDYIKPDQVLSI). Residues asparagine 48, asparagine 100, asparagine 138, asparagine 195, asparagine 209, and asparagine 227 are each glycosylated (N-linked (GlcNAc...) asparagine). LysM domains are found at residues 120–165 (STYT…VINT) and 177–221 (GTYV…IIIL).

The protein belongs to the secreted LysM effector family.

In terms of biological role, secreted effector that enables the plant pathogenic fungus to manipulate host defenses for successful infection. Binds chitin fragments and blocks the activation of chitin-induced plant defense responses. Protects fungal hyphae against hydrolytic plant enzymes. The protein is Secreted LysM effector Mg3LysM of Zymoseptoria tritici (strain CBS 115943 / IPO323) (Speckled leaf blotch fungus).